Here is a 159-residue protein sequence, read N- to C-terminus: ATP synthase subunit b 2 (159 aa).

A helical membrane pass occupies residues 1–21 (MDATFWAFIALVIFVVIVVYM).

The protein belongs to the ATPase B chain family. In terms of assembly, F-type ATPases have 2 components, F(1) - the catalytic core - and F(0) - the membrane proton channel. F(1) has five subunits: alpha(3), beta(3), gamma(1), delta(1), epsilon(1). F(0) has three main subunits: a(1), b(2) and c(10-14). The alpha and beta chains form an alternating ring which encloses part of the gamma chain. F(1) is attached to F(0) by a central stalk formed by the gamma and epsilon chains, while a peripheral stalk is formed by the delta and b chains.

It is found in the cell inner membrane. In terms of biological role, f(1)F(0) ATP synthase produces ATP from ADP in the presence of a proton or sodium gradient. F-type ATPases consist of two structural domains, F(1) containing the extramembraneous catalytic core and F(0) containing the membrane proton channel, linked together by a central stalk and a peripheral stalk. During catalysis, ATP synthesis in the catalytic domain of F(1) is coupled via a rotary mechanism of the central stalk subunits to proton translocation. Functionally, component of the F(0) channel, it forms part of the peripheral stalk, linking F(1) to F(0). This chain is ATP synthase subunit b 2, found in Brucella canis (strain ATCC 23365 / NCTC 10854 / RM-666).